A 257-amino-acid chain; its full sequence is 3-deoxy-manno-octulosonate cytidylyltransferase (257 aa).

The protein belongs to the KdsB family.

The protein localises to the cytoplasm. It carries out the reaction 3-deoxy-alpha-D-manno-oct-2-ulosonate + CTP = CMP-3-deoxy-beta-D-manno-octulosonate + diphosphate. It functions in the pathway nucleotide-sugar biosynthesis; CMP-3-deoxy-D-manno-octulosonate biosynthesis; CMP-3-deoxy-D-manno-octulosonate from 3-deoxy-D-manno-octulosonate and CTP: step 1/1. It participates in bacterial outer membrane biogenesis; lipopolysaccharide biosynthesis. Activates KDO (a required 8-carbon sugar) for incorporation into bacterial lipopolysaccharide in Gram-negative bacteria. The sequence is that of 3-deoxy-manno-octulosonate cytidylyltransferase from Rhodospirillum centenum (strain ATCC 51521 / SW).